We begin with the raw amino-acid sequence, 255 residues long: uncharacterized protein (255 aa).

The first 28 residues, 1 to 28 (MFKLNFKNNYKVLTLLFSLTLSMFVSNA), serve as a signal peptide directing secretion. N-linked (GlcNAc...) asparagine glycosylation is found at asparagine 38, asparagine 61, and asparagine 83.

The protein resides in the secreted. This is an uncharacterized protein from Dictyostelium discoideum (Social amoeba).